The following is a 425-amino-acid chain: UPF0761 membrane protein PXO_04555 (425 aa).

Transmembrane regions (helical) follow at residues 48-68 (VFAL…FPAF), 105-125 (FTVA…HSIE), 154-174 (GTML…LPLF), 182-202 (LAEF…IVLI), 219-239 (GALL…VYLG), and 250-270 (ALSA…SVLL).

Belongs to the UPF0761 family.

The protein resides in the cell inner membrane. The polypeptide is UPF0761 membrane protein PXO_04555 (Xanthomonas oryzae pv. oryzae (strain PXO99A)).